A 1058-amino-acid chain; its full sequence is Carbamoyl phosphate synthase large chain (1058 aa).

The tract at residues 1-401 is carboxyphosphate synthetic domain; that stretch reads MPKRTDIQKI…SLLKACRSLE (401 aa). ATP is bound by residues R129, R169, G175, G176, R208, I210, E215, G241, I242, H243, Q284, and E298. An ATP-grasp 1 domain is found at 133-327; that stretch reads KQLMEELEQP…IAKLAAKIAV (195 aa). 3 residues coordinate Mg(2+): Q284, E298, and N300. Q284, E298, and N300 together coordinate Mn(2+). Positions 402–546 are oligomerization domain; it reads IGVHHNEIPE…YSTYGWENES (145 aa). Positions 547–929 are carbamoyl phosphate synthetic domain; the sequence is IRSDKESVLV…ALYKAFEASY (383 aa). Residues 671–861 form the ATP-grasp 2 domain; that stretch reads EQALKELDIP…MAQVATKLIL (191 aa). ATP contacts are provided by R707, S746, I748, E752, G777, V778, H779, S780, Q820, and E832. 3 residues coordinate Mg(2+): Q820, E832, and N834. The Mn(2+) site is built by Q820, E832, and N834. Positions 930–1058 constitute an MGS-like domain; that stretch reads LHLPTFGNVV…ESRSFVTEAI (129 aa). An allosteric domain region spans residues 930 to 1058; the sequence is LHLPTFGNVV…ESRSFVTEAI (129 aa).

This sequence belongs to the CarB family. Composed of two chains; the small (or glutamine) chain promotes the hydrolysis of glutamine to ammonia, which is used by the large (or ammonia) chain to synthesize carbamoyl phosphate. Tetramer of heterodimers (alpha,beta)4. Mg(2+) serves as cofactor. Requires Mn(2+) as cofactor.

It catalyses the reaction hydrogencarbonate + L-glutamine + 2 ATP + H2O = carbamoyl phosphate + L-glutamate + 2 ADP + phosphate + 2 H(+). It carries out the reaction hydrogencarbonate + NH4(+) + 2 ATP = carbamoyl phosphate + 2 ADP + phosphate + 2 H(+). Its pathway is amino-acid biosynthesis; L-arginine biosynthesis; carbamoyl phosphate from bicarbonate: step 1/1. It functions in the pathway pyrimidine metabolism; UMP biosynthesis via de novo pathway; (S)-dihydroorotate from bicarbonate: step 1/3. Large subunit of the glutamine-dependent carbamoyl phosphate synthetase (CPSase). CPSase catalyzes the formation of carbamoyl phosphate from the ammonia moiety of glutamine, carbonate, and phosphate donated by ATP, constituting the first step of 2 biosynthetic pathways, one leading to arginine and/or urea and the other to pyrimidine nucleotides. The large subunit (synthetase) binds the substrates ammonia (free or transferred from glutamine from the small subunit), hydrogencarbonate and ATP and carries out an ATP-coupled ligase reaction, activating hydrogencarbonate by forming carboxy phosphate which reacts with ammonia to form carbamoyl phosphate. The sequence is that of Carbamoyl phosphate synthase large chain from Streptococcus pneumoniae (strain ATCC BAA-255 / R6).